Reading from the N-terminus, the 503-residue chain is Probable cytosol aminopeptidase (503 aa).

The Mn(2+) site is built by K270 and D275. The active site involves K282. Mn(2+) is bound by residues D293, D352, and E354. R356 is an active-site residue.

It belongs to the peptidase M17 family. Requires Mn(2+) as cofactor.

Its subcellular location is the cytoplasm. It carries out the reaction Release of an N-terminal amino acid, Xaa-|-Yaa-, in which Xaa is preferably Leu, but may be other amino acids including Pro although not Arg or Lys, and Yaa may be Pro. Amino acid amides and methyl esters are also readily hydrolyzed, but rates on arylamides are exceedingly low.. The enzyme catalyses Release of an N-terminal amino acid, preferentially leucine, but not glutamic or aspartic acids.. Presumably involved in the processing and regular turnover of intracellular proteins. Catalyzes the removal of unsubstituted N-terminal amino acids from various peptides. The polypeptide is Probable cytosol aminopeptidase (Yersinia enterocolitica serotype O:8 / biotype 1B (strain NCTC 13174 / 8081)).